A 271-amino-acid polypeptide reads, in one-letter code: MHFMTALRAAWRTRNSLLCVGLDPDPTRFPAHLHGQPDAIFRFCSEIVDATADLVCCFKPQIAYFAAQRAEDQLEALIAHIHARHPGTPVILDAKRGDIGSSAGQYAVEAFERFGADAITVNPYMGRDSVEPYLEYTDKGVILLCRTSNPGGSDLQFLDVGGGERLFERVARLVADEWNQSGNCSLVVGATFPNEIARVRELVGDLPLLVPGIGAQGGDIAATVEAGRSADRTGLMINSSRAILYAGADHDFAAAARRAALDTRDAINRHR.

The active-site Proton donor is lysine 95.

It belongs to the OMP decarboxylase family. Type 2 subfamily.

It carries out the reaction orotidine 5'-phosphate + H(+) = UMP + CO2. It functions in the pathway pyrimidine metabolism; UMP biosynthesis via de novo pathway; UMP from orotate: step 2/2. This Aromatoleum aromaticum (strain DSM 19018 / LMG 30748 / EbN1) (Azoarcus sp. (strain EbN1)) protein is Orotidine 5'-phosphate decarboxylase.